A 346-amino-acid chain; its full sequence is Tetraacyldisaccharide 4'-kinase (346 aa).

62-69 (TAGGTGKT) is an ATP binding site.

It belongs to the LpxK family.

The enzyme catalyses a lipid A disaccharide + ATP = a lipid IVA + ADP + H(+). It functions in the pathway glycolipid biosynthesis; lipid IV(A) biosynthesis; lipid IV(A) from (3R)-3-hydroxytetradecanoyl-[acyl-carrier-protein] and UDP-N-acetyl-alpha-D-glucosamine: step 6/6. Functionally, transfers the gamma-phosphate of ATP to the 4'-position of a tetraacyldisaccharide 1-phosphate intermediate (termed DS-1-P) to form tetraacyldisaccharide 1,4'-bis-phosphate (lipid IVA). The sequence is that of Tetraacyldisaccharide 4'-kinase from Xanthomonas oryzae pv. oryzae (strain MAFF 311018).